The primary structure comprises 137 residues: Ribonuclease VapC27 (137 aa).

The PINc domain occupies 7 to 125 (VDTSVAIPLL…ATRDARAKDT (119 aa)). Mg(2+) contacts are provided by Asp8 and Asp101.

Belongs to the PINc/VapC protein family. Interacts with cognate antitoxin VapB27. It depends on Mg(2+) as a cofactor.

The protein resides in the secreted. Functionally, probably the toxic component of a type II toxin-antitoxin (TA) system. An RNase. Its cognate antitoxin is VapB27. In Mycobacterium tuberculosis (strain ATCC 25618 / H37Rv), this protein is Ribonuclease VapC27.